Here is an 85-residue protein sequence, read N- to C-terminus: Large ribosomal subunit protein bL27 (85 aa).

Belongs to the bacterial ribosomal protein bL27 family.

The chain is Large ribosomal subunit protein bL27 from Campylobacter concisus (strain 13826).